Here is a 426-residue protein sequence, read N- to C-terminus: Histidine--tRNA ligase (426 aa).

The protein belongs to the class-II aminoacyl-tRNA synthetase family. In terms of assembly, homodimer.

It is found in the cytoplasm. The catalysed reaction is tRNA(His) + L-histidine + ATP = L-histidyl-tRNA(His) + AMP + diphosphate + H(+). This Microcystis aeruginosa (strain NIES-843 / IAM M-2473) protein is Histidine--tRNA ligase.